A 524-amino-acid polypeptide reads, in one-letter code: Tyrosine-protein kinase HCK (524 aa).

2 disordered regions span residues 1-20 (MGGR…GRVP) and 35-71 (KASK…LPPG). Gly-2 carries N-myristoyl glycine lipidation. The S-palmitoyl cysteine moiety is linked to residue Gly-3. The residue at position 50 (Tyr-50) is a Phosphotyrosine; by autocatalysis. One can recognise an SH3 domain in the interval 76-136 (SEDTIVVALY…PSNYVARVNS (61 aa)). One can recognise an SH2 domain in the interval 142–239 (WFFKGISRKD…GLCQKLSVPC (98 aa)). Thr-200 carries the post-translational modification Phosphothreonine. The residue at position 207 (Tyr-207) is a Phosphotyrosine. Residues 260 to 513 (LQMEKKLGAG…YIQSVLDDFY (254 aa)) enclose the Protein kinase domain. Residues 266-274 (LGAGQFGEV) and Lys-288 contribute to the ATP site. Catalysis depends on Asp-379, which acts as the Proton acceptor. Tyr-409 carries the post-translational modification Phosphotyrosine; by autocatalysis. At Ser-460 the chain carries Phosphoserine. Tyr-520 is subject to Phosphotyrosine.

The protein belongs to the protein kinase superfamily. Tyr protein kinase family. SRC subfamily. As to quaternary structure, interacts with ADAM15. Interacts with FASLG. Interacts with ARRB1 and ARRB2. Interacts with FCGR1A; the interaction may be indirect. Interacts with IL6ST. Interacts (via SH3 domain) with ELMO1. Interacts (via SH3 domain) with TP73. Interacts with YAP1. Interacts with ABL1 and ITGB1, and thereby recruits ABL1 to activated ITGB1. Interacts (via SH2 domain) with FLT3 (tyrosine phosphorylated). Interacts with CBL. Interacts with VAV1, WAS and RAPGEF1. Interacts (via SH3 domain) with WDCP. In terms of processing, phosphorylated on several tyrosine residues. Autophosphorylated. Becomes rapidly phosphorylated upon activation of the immunoglobulin receptors FCGR1A and FCGR2A. Phosphorylation at Tyr-409 increases kinase activity. Phosphorylation at Tyr-520 inhibits kinase activity. Kinase activity is not required for phosphorylation at Tyr-520, suggesting that this site may be a target of other kinases. Post-translationally, ubiquitinated by CBL, leading to its degradation via the proteasome. Isoform 2 palmitoylation at position 2 requires prior myristoylation. Palmitoylation at position 3 is required for caveolar localization of isoform 2. In terms of tissue distribution, expressed strongly in spleen and at very low levels in thymus.

Its subcellular location is the cytoplasmic vesicle. The protein localises to the secretory vesicle. It is found in the cytoplasm. The protein resides in the cytosol. It localises to the membrane. Its subcellular location is the caveola. The protein localises to the lysosome. It is found in the cell projection. The protein resides in the podosome membrane. It localises to the cell membrane. Its subcellular location is the cell junction. The protein localises to the focal adhesion. It is found in the cytoskeleton. The protein resides in the golgi apparatus. It localises to the nucleus. It catalyses the reaction L-tyrosyl-[protein] + ATP = O-phospho-L-tyrosyl-[protein] + ADP + H(+). With respect to regulation, subject to autoinhibition, mediated by intramolecular interactions involving the SH2 and SH3 domains. Kinase activity is also regulated by phosphorylation at regulatory tyrosine residues. Phosphorylation at Tyr-409 is required for optimal activity. Phosphorylation at Tyr-520 inhibits kinase activity. Non-receptor tyrosine-protein kinase found in hematopoietic cells that transmits signals from cell surface receptors and plays an important role in the regulation of innate immune responses, including neutrophil, monocyte, macrophage and mast cell functions, phagocytosis, cell survival and proliferation, cell adhesion and migration. Acts downstream of receptors that bind the Fc region of immunoglobulins, such as FCGR1A and FCGR2A, but also CSF3R, PLAUR, the receptors for IFNG, IL2, IL6 and IL8, and integrins, such as ITGB1 and ITGB2. During the phagocytic process, mediates mobilization of secretory lysosomes, degranulation, and activation of NADPH oxidase to bring about the respiratory burst. Plays a role in the release of inflammatory molecules. Promotes reorganization of the actin cytoskeleton and actin polymerization, formation of podosomes and cell protrusions. Inhibits TP73-mediated transcription activation and TP73-mediated apoptosis. Phosphorylates CBL in response to activation of immunoglobulin gamma Fc region receptors. Phosphorylates ADAM15, BCR, ELMO1, FCGR2A, GAB1, GAB2, RAPGEF1, STAT5B, TP73, VAV1 and WAS. The chain is Tyrosine-protein kinase HCK (Hck) from Rattus norvegicus (Rat).